The following is a 1018-amino-acid chain: Calcium-transporting ATPase sarcoplasmic/endoplasmic reticulum type (1018 aa).

Over 1–48 (MEDGHSKTVDEVLSHFRVDPERGLSLDQVKEYQKKYGPNELPAEEGKT) the chain is Cytoplasmic. Residues 49-69 (LWQLVLEQFDDLLVKILLLAA) traverse the membrane as a helical segment. Over 70–88 (IISFVLALFEEHEGVEAFV) the chain is Lumenal. A helical transmembrane segment spans residues 89 to 109 (EPFVILLILIANAVVGVWQER). Residues 110 to 252 (NAESAIEALK…EIKTPLQQKL (143 aa)) lie on the Cytoplasmic side of the membrane. A helical membrane pass occupies residues 253 to 272 (DEFGEQLSKVISLICVAVWA). Residues 273–294 (INIGHFNDPAHGGSWIKGAVYY) lie on the Lumenal side of the membrane. The helical transmembrane segment at 295–312 (FKIAVALAVAAIPEGLPA) threads the bilayer. Ca(2+)-binding residues include V303, A304, I306, and E308. The Cytoplasmic portion of the chain corresponds to 313 to 756 (VITTCLALGT…EEGRAIYNNM (444 aa)). Residue D350 is the 4-aspartylphosphate intermediate of the active site. Mg(2+)-binding residues include D702 and D706. Residues 757 to 776 (KQFIRYLISSNIGEVVSIFL) traverse the membrane as a helical segment. Positions 767 and 770 each coordinate Ca(2+). At 777 to 786 (TAALGLPEAL) the chain is on the lumenal side. Residues 787 to 807 (IPVQLLWVNLVTDGLPATALG) traverse the membrane as a helical segment. N795, T798, and D799 together coordinate Ca(2+). Residues 808–827 (FNPPDLDIMTKPPRKADEGL) lie on the Cytoplasmic side of the membrane. The chain crosses the membrane as a helical span at residues 828 to 850 (ISGWLFFRYMAIGGYVGCATVGG). Residues 851–896 (AAWWFMFSETGPQLSYWQLTHHLSCLGGGEEFKGIDCKIFNDPHPM) lie on the Lumenal side of the membrane. The chain crosses the membrane as a helical span at residues 897–916 (TMALSVLVTIEMLNAMNSLS). E907 lines the Ca(2+) pocket. The Cytoplasmic segment spans residues 917–929 (ENQSLVQMPPWCN). Residues 930 to 948 (IWLIASMCLSFALHFVILY) traverse the membrane as a helical segment. Over 949–963 (VDVLSTVFQVTPLDG) the chain is Lumenal. Residues 964–984 (NEWMTVMKFSLPVVLLDEILK) traverse the membrane as a helical segment. The Cytoplasmic segment spans residues 985–1018 (FVARRISDGESYIKNMHGLVLAWAVFFAYIIWGP).

Belongs to the cation transport ATPase (P-type) (TC 3.A.3) family.

It is found in the endoplasmic reticulum membrane. It localises to the sarcoplasmic reticulum membrane. The catalysed reaction is Ca(2+)(in) + ATP + H2O = Ca(2+)(out) + ADP + phosphate + H(+). This magnesium-dependent enzyme catalyzes the hydrolysis of ATP coupled with the transport of calcium. This is Calcium-transporting ATPase sarcoplasmic/endoplasmic reticulum type from Anopheles gambiae (African malaria mosquito).